The primary structure comprises 204 residues: Cytochrome c oxidase subunit 3 (204 aa).

5 helical membrane-spanning segments follow: residues 12–32 (YGNL…IQWW), 56–76 (GMML…WAYF), 101–121 (FQIP…VTWA), 133–153 (AIHS…LQMM), and 171–191 (FFVA…FLFM).

Belongs to the cytochrome c oxidase subunit 3 family. As to quaternary structure, component of the cytochrome c oxidase (complex IV, CIV), a multisubunit enzyme composed of a catalytic core of 3 subunits and several supernumerary subunits. The complex exists as a monomer or a dimer and forms supercomplexes (SCs) in the inner mitochondrial membrane with ubiquinol-cytochrome c oxidoreductase (cytochrome b-c1 complex, complex III, CIII).

It is found in the mitochondrion inner membrane. It catalyses the reaction 4 Fe(II)-[cytochrome c] + O2 + 8 H(+)(in) = 4 Fe(III)-[cytochrome c] + 2 H2O + 4 H(+)(out). Component of the cytochrome c oxidase, the last enzyme in the mitochondrial electron transport chain which drives oxidative phosphorylation. The respiratory chain contains 3 multisubunit complexes succinate dehydrogenase (complex II, CII), ubiquinol-cytochrome c oxidoreductase (cytochrome b-c1 complex, complex III, CIII) and cytochrome c oxidase (complex IV, CIV), that cooperate to transfer electrons derived from NADH and succinate to molecular oxygen, creating an electrochemical gradient over the inner membrane that drives transmembrane transport and the ATP synthase. Cytochrome c oxidase is the component of the respiratory chain that catalyzes the reduction of oxygen to water. Electrons originating from reduced cytochrome c in the intermembrane space (IMS) are transferred via the dinuclear copper A center (CU(A)) of subunit 2 and heme A of subunit 1 to the active site in subunit 1, a binuclear center (BNC) formed by heme A3 and copper B (CU(B)). The BNC reduces molecular oxygen to 2 water molecules using 4 electrons from cytochrome c in the IMS and 4 protons from the mitochondrial matrix. The protein is Cytochrome c oxidase subunit 3 (COIII) of Enteroctopus dofleini (North Pacific giant octopus).